Consider the following 107-residue polypeptide: CLAVATA3/ESR (CLE)-related protein 10 (107 aa).

A signal peptide spans 1–23 (MKTNRNRPINILIVFFLLTTARA). N-linked (GlcNAc...) asparagine glycans are attached at residues Asn27 and Asn30. The tract at residues 73–107 (SRQPLFSPPPPPTEIDQRYGVEKRLVPSGPNPLHN) is disordered. Positions 87–97 (IDQRYGVEKRL) are enriched in basic and acidic residues. A hydroxyproline mark is found at Pro99 and Pro102. Pro102 carries an O-linked (Ara...) hydroxyproline glycan.

The protein belongs to the CLV3/ESR signal peptide family. The O-glycosylation (arabinosylation) of the hydroxyproline Pro-102 enhances binding affinity of the CLE10p peptide for its receptor. In terms of tissue distribution, expressed in stems, apex, leaves, flowers, siliques and pollen.

It is found in the secreted. The protein localises to the extracellular space. Functionally, extracellular signal peptide that regulates cell fate. Represses root apical meristem maintenance. Regulates the transition of protophloem cells from proliferation to differentiation, thus impinging on postembryonic growth capacity of the root meristem; this signaling pathway requires CRN and CLV2. The polypeptide is CLAVATA3/ESR (CLE)-related protein 10 (Arabidopsis thaliana (Mouse-ear cress)).